Consider the following 359-residue polypeptide: 3-isopropylmalate dehydrogenase (359 aa).

77-88 (GPKWGTGDVRPE) contacts NAD(+). The substrate site is built by Arg-95, Arg-105, Arg-134, and Asp-223. Residues Asp-223, Asp-248, and Asp-252 each coordinate Mg(2+). Residue 287–298 (GSAPDLPAGKVN) participates in NAD(+) binding.

Belongs to the isocitrate and isopropylmalate dehydrogenases family. Homodimer. The cofactor is Mg(2+). It depends on Mn(2+) as a cofactor.

It localises to the cytoplasm. The catalysed reaction is (2R,3S)-3-isopropylmalate + NAD(+) = 4-methyl-2-oxopentanoate + CO2 + NADH. Its pathway is amino-acid biosynthesis; L-leucine biosynthesis; L-leucine from 3-methyl-2-oxobutanoate: step 3/4. Its function is as follows. Catalyzes the oxidation of 3-carboxy-2-hydroxy-4-methylpentanoate (3-isopropylmalate) to 3-carboxy-4-methyl-2-oxopentanoate. The product decarboxylates to 4-methyl-2 oxopentanoate. The polypeptide is 3-isopropylmalate dehydrogenase (LEU2) (Diutina rugosa (Yeast)).